The primary structure comprises 701 residues: Octapeptide-repeat antigen (701 aa).

13 N-linked (GlcNAc...) asparagine glycosylation sites follow: asparagine 40, asparagine 41, asparagine 76, asparagine 111, asparagine 127, asparagine 139, asparagine 181, asparagine 189, asparagine 311, asparagine 334, asparagine 344, asparagine 477, and asparagine 557. The segment at 120 to 140 is disordered; it reads IENEEKSNGSRKSSNKQKYNE. The interval 641–701 is disordered; that stretch reads LSGSSTGSMN…IKSGSKDHIK (61 aa). Low complexity predominate over residues 642–655; it reads SGSSTGSMNNGKSG. 6 consecutive repeat copies span residues 653-660, 661-668, 669-676, 677-684, 685-692, and 693-700. Positions 653 to 700 are 6 X 8 AA approximate tandem repeats; that stretch reads KSGSKSDIKGGSKDDIKSGSKDDIKSGSKADIKSGSKDDIKSGSKDHI. The span at 656–701 shows a compositional bias: basic and acidic residues; it reads SKSDIKGGSKDDIKSGSKDDIKSGSKADIKSGSKDDIKSGSKDHIK.

It belongs to the ATP-dependent AMP-binding enzyme family.

Its subcellular location is the parasitophorous vacuole. This chain is Octapeptide-repeat antigen, found in Plasmodium falciparum (isolate NF7 / Ghana).